A 572-amino-acid polypeptide reads, in one-letter code: Proline--tRNA ligase (572 aa).

The protein belongs to the class-II aminoacyl-tRNA synthetase family. ProS type 1 subfamily. Homodimer.

The protein localises to the cytoplasm. The enzyme catalyses tRNA(Pro) + L-proline + ATP = L-prolyl-tRNA(Pro) + AMP + diphosphate. In terms of biological role, catalyzes the attachment of proline to tRNA(Pro) in a two-step reaction: proline is first activated by ATP to form Pro-AMP and then transferred to the acceptor end of tRNA(Pro). As ProRS can inadvertently accommodate and process non-cognate amino acids such as alanine and cysteine, to avoid such errors it has two additional distinct editing activities against alanine. One activity is designated as 'pretransfer' editing and involves the tRNA(Pro)-independent hydrolysis of activated Ala-AMP. The other activity is designated 'posttransfer' editing and involves deacylation of mischarged Ala-tRNA(Pro). The misacylated Cys-tRNA(Pro) is not edited by ProRS. This is Proline--tRNA ligase from Yersinia pseudotuberculosis serotype O:1b (strain IP 31758).